A 289-amino-acid polypeptide reads, in one-letter code: Phenylalanine-4-hydroxylase (289 aa).

Residues H144, H149, and E189 each coordinate Fe cation.

This sequence belongs to the biopterin-dependent aromatic amino acid hydroxylase family. It depends on Fe(2+) as a cofactor.

The enzyme catalyses (6R)-L-erythro-5,6,7,8-tetrahydrobiopterin + L-phenylalanine + O2 = (4aS,6R)-4a-hydroxy-L-erythro-5,6,7,8-tetrahydrobiopterin + L-tyrosine. It participates in amino-acid degradation; L-phenylalanine degradation; acetoacetate and fumarate from L-phenylalanine: step 1/6. This is Phenylalanine-4-hydroxylase (phhA) from Vibrio cholerae serotype O1 (strain ATCC 39315 / El Tor Inaba N16961).